A 413-amino-acid chain; its full sequence is Serine hydroxymethyltransferase (413 aa).

(6S)-5,6,7,8-tetrahydrofolate is bound by residues leucine 117 and 121 to 123; that span reads GHL. An N6-(pyridoxal phosphate)lysine modification is found at lysine 226. 349-351 contributes to the (6S)-5,6,7,8-tetrahydrofolate binding site; it reads SPF.

It belongs to the SHMT family. In terms of assembly, homodimer. Pyridoxal 5'-phosphate serves as cofactor.

The protein localises to the cytoplasm. It catalyses the reaction (6R)-5,10-methylene-5,6,7,8-tetrahydrofolate + glycine + H2O = (6S)-5,6,7,8-tetrahydrofolate + L-serine. Its pathway is one-carbon metabolism; tetrahydrofolate interconversion. It functions in the pathway amino-acid biosynthesis; glycine biosynthesis; glycine from L-serine: step 1/1. Functionally, catalyzes the reversible interconversion of serine and glycine with tetrahydrofolate (THF) serving as the one-carbon carrier. This reaction serves as the major source of one-carbon groups required for the biosynthesis of purines, thymidylate, methionine, and other important biomolecules. Also exhibits THF-independent aldolase activity toward beta-hydroxyamino acids, producing glycine and aldehydes, via a retro-aldol mechanism. The sequence is that of Serine hydroxymethyltransferase from Listeria monocytogenes serotype 4b (strain F2365).